We begin with the raw amino-acid sequence, 190 residues long: Elongation factor P (190 aa).

The protein belongs to the elongation factor P family.

Its subcellular location is the cytoplasm. The protein operates within protein biosynthesis; polypeptide chain elongation. In terms of biological role, involved in peptide bond synthesis. Stimulates efficient translation and peptide-bond synthesis on native or reconstituted 70S ribosomes in vitro. Probably functions indirectly by altering the affinity of the ribosome for aminoacyl-tRNA, thus increasing their reactivity as acceptors for peptidyl transferase. The sequence is that of Elongation factor P from Bartonella bacilliformis (strain ATCC 35685 / KC583 / Herrer 020/F12,63).